Consider the following 197-residue polypeptide: Holliday junction branch migration complex subunit RuvA (197 aa).

The interval 1 to 64 is domain I; that stretch reads MIGRLSGKLI…EDAHLLYGFA (64 aa). Residues 65-143 form a domain II region; that stretch reads SKEERQTFRQ…TGGNLTVPGG (79 aa). The segment at 143–147 is flexible linker; that stretch reads GLPFA. Positions 148–197 are domain III; it reads ATPDEKSDIVNALLALGYNEKEAAAATKSLPADVTVSEGVRLALKSLMKV.

Belongs to the RuvA family. In terms of assembly, homotetramer. Forms an RuvA(8)-RuvB(12)-Holliday junction (HJ) complex. HJ DNA is sandwiched between 2 RuvA tetramers; dsDNA enters through RuvA and exits via RuvB. An RuvB hexamer assembles on each DNA strand where it exits the tetramer. Each RuvB hexamer is contacted by two RuvA subunits (via domain III) on 2 adjacent RuvB subunits; this complex drives branch migration. In the full resolvosome a probable DNA-RuvA(4)-RuvB(12)-RuvC(2) complex forms which resolves the HJ.

It localises to the cytoplasm. Functionally, the RuvA-RuvB-RuvC complex processes Holliday junction (HJ) DNA during genetic recombination and DNA repair, while the RuvA-RuvB complex plays an important role in the rescue of blocked DNA replication forks via replication fork reversal (RFR). RuvA specifically binds to HJ cruciform DNA, conferring on it an open structure. The RuvB hexamer acts as an ATP-dependent pump, pulling dsDNA into and through the RuvAB complex. HJ branch migration allows RuvC to scan DNA until it finds its consensus sequence, where it cleaves and resolves the cruciform DNA. The polypeptide is Holliday junction branch migration complex subunit RuvA (Chromobacterium violaceum (strain ATCC 12472 / DSM 30191 / JCM 1249 / CCUG 213 / NBRC 12614 / NCIMB 9131 / NCTC 9757 / MK)).